The primary structure comprises 172 residues: Large ribosomal subunit protein uL5 (172 aa).

It belongs to the universal ribosomal protein uL5 family. Component of the large ribosomal subunit.

The protein localises to the nucleus. Its subcellular location is the cytoplasm. Functionally, component of the ribosome, a large ribonucleoprotein complex responsible for the synthesis of proteins in the cell. The small ribosomal subunit (SSU) binds messenger RNAs (mRNAs) and translates the encoded message by selecting cognate aminoacyl-transfer RNA (tRNA) molecules. The large subunit (LSU) contains the ribosomal catalytic site termed the peptidyl transferase center (PTC), which catalyzes the formation of peptide bonds, thereby polymerizing the amino acids delivered by tRNAs into a polypeptide chain. The nascent polypeptides leave the ribosome through a tunnel in the LSU and interact with protein factors that function in enzymatic processing, targeting, and the membrane insertion of nascent chains at the exit of the ribosomal tunnel. The chain is Large ribosomal subunit protein uL5 (RPL11) from Tetrahymena thermophila.